The chain runs to 360 residues: 3-dehydroquinate synthase (360 aa).

Residues 70 to 75 (DGESLK), 128 to 129 (TT), K141, and K150 each bind NAD(+). Zn(2+) contacts are provided by E182, H243, and H259.

It belongs to the sugar phosphate cyclases superfamily. Dehydroquinate synthase family. It depends on NAD(+) as a cofactor. Co(2+) serves as cofactor. Zn(2+) is required as a cofactor.

The protein localises to the cytoplasm. The catalysed reaction is 7-phospho-2-dehydro-3-deoxy-D-arabino-heptonate = 3-dehydroquinate + phosphate. It functions in the pathway metabolic intermediate biosynthesis; chorismate biosynthesis; chorismate from D-erythrose 4-phosphate and phosphoenolpyruvate: step 2/7. Catalyzes the conversion of 3-deoxy-D-arabino-heptulosonate 7-phosphate (DAHP) to dehydroquinate (DHQ). The polypeptide is 3-dehydroquinate synthase (Thermoplasma volcanium (strain ATCC 51530 / DSM 4299 / JCM 9571 / NBRC 15438 / GSS1)).